Consider the following 332-residue polypeptide: Leucine carboxyl methyltransferase 1 homolog (332 aa).

Residues lysine 22, arginine 57, glycine 83, aspartate 107, 153-154 (DL), and glutamate 180 each bind S-adenosyl-L-methionine.

The protein belongs to the methyltransferase superfamily. LCMT family.

The protein resides in the cytoplasm. It is found in the membrane. It catalyses the reaction [phosphatase 2A protein]-C-terminal L-leucine + S-adenosyl-L-methionine = [phosphatase 2A protein]-C-terminal L-leucine methyl ester + S-adenosyl-L-homocysteine. Functionally, methylates the carboxyl group of the C-terminal leucine residue of protein phosphatase 2A (PP2A) catalytic subunits to form alpha-leucine ester residues. Involved in brassinosteroid (BR) signaling. Plays a negative role in BR signaling pathway. Functions as a positive regulator of BRI1 receptor-kinase degradation. Methylates PP2A, thus facilitating its association with activated BRI1. This leads to receptor dephosphorylation and degradation, and thus to the termination of BR signaling. May act upstream of ASK7/BIN2. Involved in methylation of PP2A during environmental stress responses. This is Leucine carboxyl methyltransferase 1 homolog from Arabidopsis thaliana (Mouse-ear cress).